A 254-amino-acid chain; its full sequence is CDP-diacylglycerol pyrophosphatase (254 aa).

A helical membrane pass occupies residues 6–26 (YFLLALLVAILAALAGGYYWL).

The protein belongs to the Cdh family.

The protein localises to the cell inner membrane. The enzyme catalyses a CDP-1,2-diacyl-sn-glycerol + H2O = a 1,2-diacyl-sn-glycero-3-phosphate + CMP + 2 H(+). It functions in the pathway phospholipid metabolism; CDP-diacylglycerol degradation; phosphatidate from CDP-diacylglycerol: step 1/1. The chain is CDP-diacylglycerol pyrophosphatase from Klebsiella pneumoniae (strain 342).